The sequence spans 96 residues: Co-chaperonin GroES (96 aa).

Belongs to the GroES chaperonin family. Heptamer of 7 subunits arranged in a ring. Interacts with the chaperonin GroEL.

It localises to the cytoplasm. Functionally, together with the chaperonin GroEL, plays an essential role in assisting protein folding. The GroEL-GroES system forms a nano-cage that allows encapsulation of the non-native substrate proteins and provides a physical environment optimized to promote and accelerate protein folding. GroES binds to the apical surface of the GroEL ring, thereby capping the opening of the GroEL channel. This Geobacter sp. (strain M21) protein is Co-chaperonin GroES.